The following is a 682-amino-acid chain: DNA-directed RNA polymerase subunit beta' (682 aa).

Residues cysteine 69, cysteine 71, cysteine 87, and cysteine 90 each coordinate Zn(2+). The Mg(2+) site is built by aspartate 489, aspartate 491, and aspartate 493.

This sequence belongs to the RNA polymerase beta' chain family. RpoC1 subfamily. In plastids the minimal PEP RNA polymerase catalytic core is composed of four subunits: alpha, beta, beta', and beta''. When a (nuclear-encoded) sigma factor is associated with the core the holoenzyme is formed, which can initiate transcription. Mg(2+) is required as a cofactor. The cofactor is Zn(2+).

It localises to the plastid. Its subcellular location is the chloroplast. It catalyses the reaction RNA(n) + a ribonucleoside 5'-triphosphate = RNA(n+1) + diphosphate. Its function is as follows. DNA-dependent RNA polymerase catalyzes the transcription of DNA into RNA using the four ribonucleoside triphosphates as substrates. This is DNA-directed RNA polymerase subunit beta' from Brachypodium distachyon (Purple false brome).